The sequence spans 691 residues: Elongation factor G (691 aa).

The 275-residue stretch at 12-286 folds into the tr-type G domain; it reads NKLRNIGIMA…GIVRYLPSPL (275 aa). GTP-binding positions include 21-28, 85-89, and 139-142; these read AHIDAGKT, DTPGH, and NKMD.

It belongs to the TRAFAC class translation factor GTPase superfamily. Classic translation factor GTPase family. EF-G/EF-2 subfamily.

Its subcellular location is the cytoplasm. In terms of biological role, catalyzes the GTP-dependent ribosomal translocation step during translation elongation. During this step, the ribosome changes from the pre-translocational (PRE) to the post-translocational (POST) state as the newly formed A-site-bound peptidyl-tRNA and P-site-bound deacylated tRNA move to the P and E sites, respectively. Catalyzes the coordinated movement of the two tRNA molecules, the mRNA and conformational changes in the ribosome. This Fervidobacterium nodosum (strain ATCC 35602 / DSM 5306 / Rt17-B1) protein is Elongation factor G.